The primary structure comprises 146 residues: Deoxyuridine 5'-triphosphate nucleotidohydrolase (146 aa).

Residues 65–67, N78, 82–84, and M92 contribute to the substrate site; these read RSG and LID.

It belongs to the dUTPase family. It depends on Mg(2+) as a cofactor.

The catalysed reaction is dUTP + H2O = dUMP + diphosphate + H(+). Its pathway is pyrimidine metabolism; dUMP biosynthesis; dUMP from dCTP (dUTP route): step 2/2. This enzyme is involved in nucleotide metabolism: it produces dUMP, the immediate precursor of thymidine nucleotides and it decreases the intracellular concentration of dUTP so that uracil cannot be incorporated into DNA. In Thiobacillus denitrificans (strain ATCC 25259 / T1), this protein is Deoxyuridine 5'-triphosphate nucleotidohydrolase.